Consider the following 489-residue polypeptide: Tripartite motif-containing protein 10 (489 aa).

The RING-type zinc-finger motif lies at 16 to 61 (CPICQGTLREPVTIDCGHNFCRGCLTRYCEIPGPESEESLSCPLCK). The segment at 94–135 (EVEDACPEHGEKIYFFCEEDEAQLCVVCRETGQHGAHTVRFL) adopts a B box-type zinc-finger fold. C99, H102, C121, and H127 together coordinate Zn(2+). Residues 144 to 180 (EQIQKCLVCLRKEREEIQETQSRENKRIQVLLTQVAT) adopt a coiled-coil conformation. The 195-residue stretch at 292-486 (QEMKTFLEKL…FSLSCQEGAV (195 aa)) folds into the B30.2/SPRY domain.

The protein belongs to the TRIM/RBCC family. As to quaternary structure, interacts with IFNAR1; this interaction prevents association of IFNAR1 with TYK2. In terms of tissue distribution, expressed in embryonic liver.

It is found in the cytoplasm. Functionally, E3 ligase that plays an essential role in the differentiation and survival of terminal erythroid cells. May directly bind to PTEN and promote its ubiquitination, resulting in its proteasomal degradation and activation of hypertrophic signaling. In addition, plays a role in immune response regulation by repressing the phosphorylation of STAT1 and STAT2 in the interferon/JAK/STAT signaling pathway independent of its E3 ligase activity. Mechanistically, interacts with the intracellular domain of IFNAR1 and thereby inhibits the association between TYK2 and IFNAR1. This Mus musculus (Mouse) protein is Tripartite motif-containing protein 10 (Trim10).